The following is a 248-amino-acid chain: DNA polymerase sliding clamp (248 aa).

It belongs to the PCNA family. Homotrimer. The subunits circularize to form a toroid; DNA passes through its center. Replication factor C (RFC) is required to load the toroid on the DNA.

Functionally, sliding clamp subunit that acts as a moving platform for DNA processing. Responsible for tethering the catalytic subunit of DNA polymerase and other proteins to DNA during high-speed replication. This is DNA polymerase sliding clamp from Nitrosopumilus maritimus (strain SCM1).